We begin with the raw amino-acid sequence, 407 residues long: Argininosuccinate synthase (407 aa).

Residues 11 to 19 (AYSGGLDTS) and A38 contribute to the ATP site. Y91 and S96 together coordinate L-citrulline. G121 contacts ATP. Residues T123, N127, and D128 each coordinate L-aspartate. N127 provides a ligand contact to L-citrulline. Residues R131, S181, S190, E266, and Y278 each coordinate L-citrulline.

Belongs to the argininosuccinate synthase family. Type 1 subfamily. In terms of assembly, homotetramer.

Its subcellular location is the cytoplasm. The catalysed reaction is L-citrulline + L-aspartate + ATP = 2-(N(omega)-L-arginino)succinate + AMP + diphosphate + H(+). The protein operates within amino-acid biosynthesis; L-arginine biosynthesis; L-arginine from L-ornithine and carbamoyl phosphate: step 2/3. This is Argininosuccinate synthase from Campylobacter concisus (strain 13826).